The primary structure comprises 209 residues: MDDIFNMTVPIVVENNGRNERAYDIYSRLLKDRIVLLGTEVNDQVASLICAQLLFLESQDPEKEIYLYINSPGGSVTAGLAIYDTMNYITPNVATVCMGRAASMGALLLAAGEKNMRYALPNSQVMIHQPLGGYQGQATDIDIHAREILRMRQRLNEILMEQTGQSLEKVAQDTERDYFMTAEDAKAYGLIDKVLVSRKDLDIEHEKTE.

Residue Ser-103 is the Nucleophile of the active site. The active site involves His-128.

This sequence belongs to the peptidase S14 family. As to quaternary structure, fourteen ClpP subunits assemble into 2 heptameric rings which stack back to back to give a disk-like structure with a central cavity, resembling the structure of eukaryotic proteasomes.

The protein localises to the cytoplasm. The catalysed reaction is Hydrolysis of proteins to small peptides in the presence of ATP and magnesium. alpha-casein is the usual test substrate. In the absence of ATP, only oligopeptides shorter than five residues are hydrolyzed (such as succinyl-Leu-Tyr-|-NHMec, and Leu-Tyr-Leu-|-Tyr-Trp, in which cleavage of the -Tyr-|-Leu- and -Tyr-|-Trp bonds also occurs).. Functionally, cleaves peptides in various proteins in a process that requires ATP hydrolysis. Has a chymotrypsin-like activity. Plays a major role in the degradation of misfolded proteins. The protein is ATP-dependent Clp protease proteolytic subunit of Lawsonia intracellularis (strain PHE/MN1-00).